The sequence spans 314 residues: Oxaloacetate tautomerase FAHD2B, mitochondrial (314 aa).

The N-terminal 84 residues, 1-84, are a transit peptide targeting the mitochondrion; the sequence is MLVSGRRRLL…ATLSVARRAL (84 aa). Residues glutamate 159, glutamate 161, and aspartate 190 each contribute to the Mg(2+) site.

Belongs to the FAH family. Requires Mg(2+) as cofactor. The cofactor is Mn(2+).

The protein localises to the mitochondrion. It catalyses the reaction oxaloacetate = enol-oxaloacetate. Tautomerase that converts enol-oxaloacetate, a strong inhibitor of succinate dehydrogenase, to the physiological keto form of oxaloacetate. It is thereby required to maximize aerobic respiration efficiency by preventing succinate dehydrogenase inhibition. The chain is Oxaloacetate tautomerase FAHD2B, mitochondrial from Homo sapiens (Human).